The following is a 121-amino-acid chain: Large ribosomal subunit protein uL18 (121 aa).

The segment covering 1–22 (MIKKPDKKTLRQGKHKRVRRKV) has biased composition (basic residues). The segment at 1 to 23 (MIKKPDKKTLRQGKHKRVRRKVA) is disordered.

This sequence belongs to the universal ribosomal protein uL18 family. As to quaternary structure, part of the 50S ribosomal subunit; part of the 5S rRNA/L5/L18/L25 subcomplex. Contacts the 5S and 23S rRNAs.

This is one of the proteins that bind and probably mediate the attachment of the 5S RNA into the large ribosomal subunit, where it forms part of the central protuberance. The protein is Large ribosomal subunit protein uL18 of Syntrophomonas wolfei subsp. wolfei (strain DSM 2245B / Goettingen).